Reading from the N-terminus, the 333-residue chain is Sphingomyelinase C (333 aa).

Residues 1–27 form the signal peptide; it reads MKGKLLKGVLSFGIGLGVLYGGSSVQA. C150 and C186 form a disulfide bridge.

Belongs to the neutral sphingomyelinase family. Requires Mg(2+) as cofactor.

Its subcellular location is the secreted. It carries out the reaction a sphingomyelin + H2O = phosphocholine + an N-acylsphing-4-enine + H(+). Activated by cobalt and manganese ions. Its function is as follows. Required, with sphingomyelinase, to effect target cell lysis (hemolysis). The chain is Sphingomyelinase C (sph) from Bacillus cereus.